Reading from the N-terminus, the 793-residue chain is MNNKQEEIDQFLSSTSTSPSPSSSSSPSNNDSTSLKSMISGIENLNVHSKGNDNKNNNNNNNNNNSNNNEKQKDIVSLENNSSSNNTTTTTTTTTTSNHNSNNNSNNNNNNINNNNINNNNYEPLVNGHNNGFGDKLNDQPSPSSHRVSDFSDEYSPSKVRILVADDDDVQRKILNNLLKKFHYNVTLVPNGEIAWEYINKGQQKYDLVLTDVMMPHITGFDLLQRINDHPVHRHIPVILMSGTAVDYKYANDTIKIGGQDFLTKPIAKELLKKKIDTVLQSIWQRRKEEEYKATLAQEREKGNKLAKEMELKEHEIEELTKKVSKMSSISKEAMESPLVSVTRNIEELLKQSSWSHYESEIKEKLSSILKELGSSNIYRPSFEKLIKNDSVDPVTKSFLVSEFSSTTSRRNSIPTFPQTTYNRDTKEVIKGWEFDVFKYSEDDLMPLLVDMFENFQLPEIFKIPIEKLQRFIMTVNALYRKNNRYHNFTHAFDVTQTVYTFLTSFNAAQYLTHLDIFALLISCMCHDLNHPGFNNTFQVNAQTELSLEYNDISVLENHHAMLTFKILRNSECNILEGLNEDQYKELRRSVVQLILATDMQNHFEHTNKFQHHLNNLPFDRNKKEDRQMILNFLIKCGDISNIARPWHLNFEWSLRVSDEFFQQSHYETICGYPVTPFMDKTKTTRARIAADFIDFVASPLFQSMAKFLKESQFLLKVISKNRENWQAYMELQKEGKCNDDDLQFMEDPTILVKSKLPKIDEEENRDKVSSSSSSSTAPLTSTSSSNNETSSS.

Residues 1-153 (MNNKQEEIDQ…SSHRVSDFSD (153 aa)) are disordered. Composition is skewed to low complexity over residues 13 to 34 (SSTS…DSTS), 54 to 69 (NKNN…SNNN), and 80 to 121 (NNSS…NNNN). Positions 161-280 (RILVADDDDV…LLKKKIDTVL (120 aa)) constitute a Response regulatory domain. D212 bears the 4-aspartylphosphate mark. In terms of domain architecture, PDEase spans 410–733 (RRNSIPTFPQ…ENWQAYMELQ (324 aa)). H487 (proton donor) is an active-site residue. A divalent metal cation is bound by residues H491, H527, D528, and D639. The disordered stretch occupies residues 756 to 793 (KLPKIDEEENRDKVSSSSSSSTAPLTSTSSSNNETSSS). A compositionally biased stretch (low complexity) spans 770–793 (SSSSSSSTAPLTSTSSSNNETSSS).

The protein belongs to the cyclic nucleotide phosphodiesterase family. Requires a divalent metal cation as cofactor. Post-translationally, the phosphorelay mechanism involves the sequential transfer of a phosphate group from Asp-212 of pde2 to 'His-65' of rdeA. Phosphorylation of Asp-212 activates the phosphodiesterase domain.

It localises to the cytoplasm. The protein localises to the cytosol. It catalyses the reaction 3',5'-cyclic AMP + H2O = AMP + H(+). Its activity is regulated as follows. Inhibited by 3-isobutyl-1-methylxanthine (IBMX). Its function is as follows. Phosphodiesterase specific for cAMP. Involved in the degradation of intracellular cAMP. Morphological suppressor of tagB. Phosphorelay protein that accepts phosphate from rdeA or supplies phosphate from regA; depending on the relative concentration of the phosphodonor proteins. The sequence is that of 3',5'-cyclic-nucleotide phosphodiesterase regA (regA) from Dictyostelium discoideum (Social amoeba).